A 627-amino-acid polypeptide reads, in one-letter code: E3 ubiquitin-protein ligase DTX1 (627 aa).

WWE domains follow at residues 14 to 94 (GLGF…PVRR) and 95 to 171 (NFYD…RLRR). Disordered stretches follow at residues 222–254 (QRRK…ALVV), 269–327 (PATG…ALPV), and 368–398 (PPVS…KSKN). Composition is skewed to pro residues over residues 230-248 (PAAP…PGGP) and 275-287 (EPAP…PRSP). The SH3-binding signature appears at 240–243 (PPPL). Residues 296–314 (PGQNNLSRPGPQRSTSVSA) show a composition bias toward polar residues. Over residues 386 to 396 (RKTKKKHLKKS) the composition is skewed to basic residues. An RING-type zinc finger spans residues 418 to 479 (CTICMERLVT…DGSLQCPTCK (62 aa)).

It belongs to the Deltex family. Homodimer. May form a heterodimer with other members of the Deltex family. Interacts with NOTCH1 via its N-terminal region and EIF3F, the interaction is required for NOTCH1 deubiquitination. Interacts with EP300. Forms a heterodimer with BBAP; the heterodimerization leading to an increase of in vitro ubiquitin ligase activity. Interacts with ITCH. Post-translationally, ubiquitinated; undergoes 'Lys-29'-linked polyubiquitination catalyzed by ITCH. Predominantly expressed in the brain and testis. Weakly expressed in the thymus, spleen and ovary. Predominantly expressed in regions containing post-mitotic differentiating neurons.

The protein resides in the cytoplasm. It localises to the nucleus. The catalysed reaction is S-ubiquitinyl-[E2 ubiquitin-conjugating enzyme]-L-cysteine + [acceptor protein]-L-lysine = [E2 ubiquitin-conjugating enzyme]-L-cysteine + N(6)-ubiquitinyl-[acceptor protein]-L-lysine.. Its pathway is protein modification; protein ubiquitination. In terms of biological role, regulator of Notch signaling, a signaling pathway involved in cell-cell communications that regulates a broad spectrum of cell-fate determinations. Mainly acts as a positive regulator of Notch, but it also acts as a negative regulator, depending on the developmental and cell context. Mediates the antineural activity of Notch, possibly by inhibiting the transcriptional activation mediated by MATCH1. Involved in neurogenesis, lymphogenesis and myogenesis, and may also be involved in MZB (Marginal zone B) cell differentiation. Promotes B-cell development at the expense of T-cell development, suggesting that it can antagonize NOTCH1. Functions as an ubiquitin ligase protein in vivo, mediating ubiquitination and promoting degradation of MEKK1, suggesting that it may regulate the Notch pathway via some ubiquitin ligase activity. The chain is E3 ubiquitin-protein ligase DTX1 (Dtx1) from Mus musculus (Mouse).